A 286-amino-acid chain; its full sequence is MSADAPVWIDEVFEDRVRYGLRGQILWEETSPFQKITIVDTEHYGRGLLLDDCWMTAERCEVCYHEYLVHPPLTTAASIARVLVIGGGDGGTVREVLRYAEVEQVDLVEIDGRVVELSQEYLGAIGTAWADPRLNVKIGDGIAFVQTAPDASYDVILVDGSDPAGPAAGLFNREFYENCRRVLKPGGVFASQAESPDSFLAVHLEMIETLSAVFAEAKPYYGWVPMYPSGWWSWLYASDTPGQFQKPQSDRLAAIEPQVEIYNRDIHQAAFAQPNFVRRGLSARQG.

In terms of domain architecture, PABS spans 6-239 (PVWIDEVFED…GWWSWLYASD (234 aa)). Glutamine 34 contributes to the S-methyl-5'-thioadenosine binding site. Residues histidine 65 and aspartate 89 each contribute to the spermidine site. Residues glutamate 109 and 140–141 (DG) each bind S-methyl-5'-thioadenosine. Catalysis depends on aspartate 159, which acts as the Proton acceptor. A spermidine-binding site is contributed by 159 to 162 (DGSD). Proline 166 contributes to the S-methyl-5'-thioadenosine binding site.

It belongs to the spermidine/spermine synthase family. As to quaternary structure, homodimer or homotetramer. Homodimer.

It is found in the cytoplasm. The enzyme catalyses S-adenosyl 3-(methylsulfanyl)propylamine + putrescine = S-methyl-5'-thioadenosine + spermidine + H(+). It participates in amine and polyamine biosynthesis; spermidine biosynthesis; spermidine from putrescine: step 1/1. Functionally, catalyzes the irreversible transfer of a propylamine group from the amino donor S-adenosylmethioninamine (decarboxy-AdoMet) to putrescine (1,4-diaminobutane) to yield spermidine. The polypeptide is Polyamine aminopropyltransferase (Synechococcus elongatus (strain ATCC 33912 / PCC 7942 / FACHB-805) (Anacystis nidulans R2)).